A 188-amino-acid polypeptide reads, in one-letter code: MKGKMLLIFMMIVMIASSAMAAEAEHAGGDLKDWAFKVINFAILVFIIVKFLGKPIKNYFAQRKELIEKSIRESQEAKELAQKALQEVEEKLKLKDKEVQDILDTAKKIGEQEKIQIVQESEKLKEKILEQAKTNIEFEVKMAKDALRLEAAELAIQLSEQKLKEKITPEEQEKLLQESIKIIEGRKN.

The helical transmembrane segment at 5 to 25 threads the bilayer; the sequence is MLLIFMMIVMIASSAMAAEAE.

The protein belongs to the ATPase B chain family. F-type ATPases have 2 components, F(1) - the catalytic core - and F(0) - the membrane proton channel. F(1) has five subunits: alpha(3), beta(3), gamma(1), delta(1), epsilon(1). F(0) has three main subunits: a(1), b(2) and c(10-14). The alpha and beta chains form an alternating ring which encloses part of the gamma chain. F(1) is attached to F(0) by a central stalk formed by the gamma and epsilon chains, while a peripheral stalk is formed by the delta and b chains.

Its subcellular location is the cell inner membrane. F(1)F(0) ATP synthase produces ATP from ADP in the presence of a proton or sodium gradient. F-type ATPases consist of two structural domains, F(1) containing the extramembraneous catalytic core and F(0) containing the membrane proton channel, linked together by a central stalk and a peripheral stalk. During catalysis, ATP synthesis in the catalytic domain of F(1) is coupled via a rotary mechanism of the central stalk subunits to proton translocation. In terms of biological role, component of the F(0) channel, it forms part of the peripheral stalk, linking F(1) to F(0). The chain is ATP synthase subunit b from Thermodesulfovibrio yellowstonii (strain ATCC 51303 / DSM 11347 / YP87).